Reading from the N-terminus, the 335-residue chain is NADH-quinone oxidoreductase subunit H (335 aa).

Transmembrane regions (helical) follow at residues 12–32, 81–101, 114–134, 154–174, 187–207, 238–258, 270–290, and 307–327; these read IIAV…GALL, VIFT…FAVI, IGLL…LFAG, VSYE…VGSF, LWFI…GVAV, FFVG…TLFF, SLAF…FILL, and WKFC…IVLL.

Belongs to the complex I subunit 1 family. In terms of assembly, NDH-1 is composed of 13 different subunits. Subunits NuoA, H, J, K, L, M, N constitute the membrane sector of the complex.

It localises to the cell inner membrane. The enzyme catalyses a quinone + NADH + 5 H(+)(in) = a quinol + NAD(+) + 4 H(+)(out). In terms of biological role, NDH-1 shuttles electrons from NADH, via FMN and iron-sulfur (Fe-S) centers, to quinones in the respiratory chain. The immediate electron acceptor for the enzyme in this species is believed to be ubiquinone. Couples the redox reaction to proton translocation (for every two electrons transferred, four hydrogen ions are translocated across the cytoplasmic membrane), and thus conserves the redox energy in a proton gradient. This subunit may bind ubiquinone. The sequence is that of NADH-quinone oxidoreductase subunit H from Pseudomonas syringae pv. tomato (strain ATCC BAA-871 / DC3000).